The following is a 525-amino-acid chain: Cytochrome P450 monooxygenase bsc2 (525 aa).

A helical transmembrane segment spans residues 12–32 (SLFILWLTTLLVSVLATAAYI). N86 and N317 each carry an N-linked (GlcNAc...) asparagine glycan. Position 456 (C456) interacts with heme.

The protein belongs to the cytochrome P450 family. Requires heme as cofactor.

It is found in the membrane. It functions in the pathway mycotoxin biosynthesis. Its function is as follows. Cytochrome P450 monooxygenase; part of the gene cluster that mediates the biosynthesis of the diterpene glucoside brassicicene C. In the first step of the brassicicene C biosynthesis, the bifunctional diterpene synthase bsc8 that possesses both prenyl transferase and terpene cyclase activity, converts isopentenyl diphosphate and dimethylallyl diphosphate into geranylgeranyl diphosphate (GGDP) that is further converted into fusicocca-2,10(14)-diene, the first precursor for brassicicene C. Fusicocca-2,10(14)-diene is then substrate of cytochrome P450 monooxygenase bsc1 for hydroxylation at the C-8 position. Oxidation at C-16 position to aldehyde is then catalyzed by the cytochrome P450 monooyxygenase bsc7, yielding fusicocca-2,10(14)-diene-8-beta,16-diol. Follows the isomerization of the double bond and reduction of aldehyde to alcohol catalyzed by the short-chain dehydrogenase/reductase bsc3 to yield the diol compound fusicocca-1,10(14)-diene-8 beta,16-diol. The next step is the oxidation at the C-3 position of fusicocca-2,10(14)-diene-8-beta,16-diol catalyzed by the alpha-ketoglutarate dependent dioxygenase bsc9, to produce a triol compound. Methylation of the hydroxy group at position 16 is performed by the methyltransferase bsc6. 16-O-methylation is followed by oxidation at the C-13 position to ketone and an alkyl shift of the methyl group leads to brassicicene C. Although the probable acetyltransferase bsc4 is included in the gene cluster, no acetylation reactions are necessary for brassicicene C biosynthesis. However, the fact that brassicicene E, which is a structurally related compound having an acetoxy group at position 12, was previously isolated from another strain of A.brassicicola suggests that the ATCC 96836 strain might also produce a small amount of brassicicene E. The polypeptide is Cytochrome P450 monooxygenase bsc2 (Alternaria brassicicola (Dark leaf spot agent)).